We begin with the raw amino-acid sequence, 350 residues long: Histidinol-phosphate aminotransferase 2 (350 aa).

N6-(pyridoxal phosphate)lysine is present on Lys210.

Belongs to the class-II pyridoxal-phosphate-dependent aminotransferase family. Histidinol-phosphate aminotransferase subfamily. As to quaternary structure, homodimer. Requires pyridoxal 5'-phosphate as cofactor.

The enzyme catalyses L-histidinol phosphate + 2-oxoglutarate = 3-(imidazol-4-yl)-2-oxopropyl phosphate + L-glutamate. It functions in the pathway amino-acid biosynthesis; L-histidine biosynthesis; L-histidine from 5-phospho-alpha-D-ribose 1-diphosphate: step 7/9. The chain is Histidinol-phosphate aminotransferase 2 from Mannheimia succiniciproducens (strain KCTC 0769BP / MBEL55E).